The following is an 841-amino-acid chain: Chitin synthase 1 (841 aa).

The span at 1–13 (MNPGQKQEHDQYP) shows a compositional bias: basic and acidic residues. Residues 1-98 (MNPGQKQEHD…YGEAPRRQPR (98 aa)) form a disordered region. Positions 76 to 85 (PPQPMGPPSP) are enriched in pro residues. 9 consecutive transmembrane segments (helical) span residues 302–322 (WFFQ…IDVG), 385–405 (SVFG…FTAL), 526–546 (LIFS…LTSA), 564–584 (ILHT…FILA), 602–622 (FFAI…VVGV), 644–664 (NIII…FLFF), 673–693 (FIQY…YAFC), 778–798 (VISW…ENIL), and 816–836 (LWSV…YLIF).

It belongs to the chitin synthase family.

The protein localises to the cell membrane. It catalyses the reaction [(1-&gt;4)-N-acetyl-beta-D-glucosaminyl](n) + UDP-N-acetyl-alpha-D-glucosamine = [(1-&gt;4)-N-acetyl-beta-D-glucosaminyl](n+1) + UDP + H(+). Functionally, polymerizes chitin, a structural polymer of the cell wall and septum, by transferring the sugar moiety of UDP-GlcNAc to the non-reducing end of the growing chitin polymer. The protein is Chitin synthase 1 (chs1) of Phycomyces blakesleeanus (strain ATCC 8743b / DSM 1359 / FGSC 10004 / NBRC 33097 / NRRL 1555).